The chain runs to 508 residues: ATP synthase subunit alpha (508 aa).

Position 170 to 177 (170 to 177 (GDRQTGKT)) interacts with ATP.

It belongs to the ATPase alpha/beta chains family. In terms of assembly, F-type ATPases have 2 components, CF(1) - the catalytic core - and CF(0) - the membrane proton channel. CF(1) has five subunits: alpha(3), beta(3), gamma(1), delta(1), epsilon(1). CF(0) has three main subunits: a(1), b(2) and c(9-12). The alpha and beta chains form an alternating ring which encloses part of the gamma chain. CF(1) is attached to CF(0) by a central stalk formed by the gamma and epsilon chains, while a peripheral stalk is formed by the delta and b chains.

The protein resides in the cell inner membrane. It carries out the reaction ATP + H2O + 4 H(+)(in) = ADP + phosphate + 5 H(+)(out). Produces ATP from ADP in the presence of a proton gradient across the membrane. The alpha chain is a regulatory subunit. The chain is ATP synthase subunit alpha from Dictyoglomus turgidum (strain DSM 6724 / Z-1310).